We begin with the raw amino-acid sequence, 363 residues long: mRNA decay activator protein ZFP36L2-A (363 aa).

The RNA-binding signature appears at 131–136; the sequence is RYKTEL. 2 consecutive C3H1-type zinc fingers follow at residues 131–159 and 169–197; these read RYKT…HGFH and KYKT…HNAE. Residues 148–189 are RNA-binding; sequence YGEKCQFAHGFHELRSLTRHPKYKTELCRTFHTIGFCPYGPR. The interval 308–349 is disordered; sequence ESPVFDAPPSPPDSLSDRDSYLSGSLSSGSLSGSDSPTLDSN. Positions 328–347 are enriched in low complexity; it reads YLSGSLSSGSLSGSDSPTLD.

In terms of processing, phosphorylated. In terms of tissue distribution, widely expressed in adults.

The protein resides in the nucleus. Its subcellular location is the cytoplasm. Zinc-finger RNA-binding protein that destabilizes several cytoplasmic AU-rich element (ARE)-containing mRNA transcripts by promoting their poly(A) tail removal or deadenylation, and hence provide a mechanism for attenuating protein synthesis. Acts as a 3'-untranslated region (UTR) ARE mRNA-binding adapter protein to communicate signaling events to the mRNA decay machinery. Functions by recruiting the CCR4-NOT deadenylase complex and probably other components of the cytoplasmic RNA decay machinery to the bound ARE-containing mRNAs, and hence promotes ARE-mediated mRNA deadenylation and decay processes. Binds to 3'-UTR ARE of numerous mRNAs. Also induces the degradation of ARE-containing mRNAs even in absence of poly(A) tail. Required for tubulogenesis during pronephros development. In Xenopus laevis (African clawed frog), this protein is mRNA decay activator protein ZFP36L2-A (zfp36l2-A).